A 64-amino-acid chain; its full sequence is Large ribosomal subunit protein bL35 (64 aa).

Over residues Met1–Lys14 the composition is skewed to basic residues. The interval Met1–Arg29 is disordered.

The protein belongs to the bacterial ribosomal protein bL35 family.

The polypeptide is Large ribosomal subunit protein bL35 (Corynebacterium glutamicum (strain R)).